The chain runs to 250 residues: Cobalt transport protein CbiM (250 aa).

The first 25 residues, 1–25 (MKQNIKLGVIAALMLIVLTPVTSNA), serve as a signal peptide directing secretion. Transmembrane regions (helical) follow at residues 33–53 (LPVK…LVGL), 68–88 (VLLA…IPSV), 100–120 (LGAI…VLIF), 132–152 (TLGA…FLIF), 163–183 (AMPV…VTSI), and 205–225 (GIFF…TVIV).

This sequence belongs to the CbiM family. As to quaternary structure, forms an energy-coupling factor (ECF) transporter complex composed of an ATP-binding protein (A component, CbiO), a transmembrane protein (T component, CbiQ) and 2 possible substrate-capture proteins (S components, CbiM and CbiN) of unknown stoichimetry.

It is found in the cell membrane. It functions in the pathway cofactor biosynthesis; adenosylcobalamin biosynthesis. Part of the energy-coupling factor (ECF) transporter complex CbiMNOQ involved in cobalt import. This Clostridioides difficile (strain R20291) (Peptoclostridium difficile) protein is Cobalt transport protein CbiM.